We begin with the raw amino-acid sequence, 243 residues long: CTD nuclear envelope phosphatase 1 homolog (243 aa).

A helical transmembrane segment spans residues 11-27 (ALLLLLSKVWTCICFMF). Residues 56 to 223 (SLVQRKTLVL…LSLLPMLDAL (168 aa)) enclose the FCP1 homology domain.

Belongs to the dullard family.

It is found in the membrane. The enzyme catalyses O-phospho-L-seryl-[protein] + H2O = L-seryl-[protein] + phosphate. It catalyses the reaction O-phospho-L-threonyl-[protein] + H2O = L-threonyl-[protein] + phosphate. Serine/threonine protein phosphatase that may dephosphorylate and activate lipin-like phosphatases. Lipins are phosphatidate phosphatases that catalyze the conversion of phosphatidic acid to diacylglycerol and control the metabolism of fatty acids at different levels. May indirectly modulate the lipid composition of nuclear and/or endoplasmic reticulum membranes and be required for proper nuclear membrane morphology and/or dynamics. May also indirectly regulate the production of lipid droplets and triacylglycerol. The polypeptide is CTD nuclear envelope phosphatase 1 homolog (l(1)G0269) (Drosophila pseudoobscura pseudoobscura (Fruit fly)).